Reading from the N-terminus, the 214-residue chain is Cytochrome c biogenesis ATP-binding export protein CcmA (214 aa).

The ABC transporter domain occupies 12 to 214; the sequence is LAAHDLAFSR…TRMLTLEVAA (203 aa). 44 to 51 serves as a coordination point for ATP; that stretch reads GDNGAGKT.

This sequence belongs to the ABC transporter superfamily. CcmA exporter (TC 3.A.1.107) family. The complex is composed of two ATP-binding proteins (CcmA) and two transmembrane proteins (CcmB).

It localises to the cell inner membrane. It catalyses the reaction heme b(in) + ATP + H2O = heme b(out) + ADP + phosphate + H(+). In terms of biological role, part of the ABC transporter complex CcmAB involved in the biogenesis of c-type cytochromes; once thought to export heme, this seems not to be the case, but its exact role is uncertain. Responsible for energy coupling to the transport system. The chain is Cytochrome c biogenesis ATP-binding export protein CcmA from Xanthomonas axonopodis pv. citri (strain 306).